The following is a 1091-amino-acid chain: Ninein homolog (1091 aa).

The segment at 1–361 (MEVSADPYEQ…AVEVDERHAS (361 aa)) is sufficient for binding to microtubules. Disordered stretches follow at residues 100 to 216 (YIES…TTSP), 456 to 483 (AQTSSSIGGTPEHSPLRPRRHSEDKEEE), 525 to 602 (KAKK…EELT), and 616 to 639 (KAAKEGRSLTPESRSKELETSLEQ). Phosphoserine is present on residues Ser-103, Ser-107, Ser-108, Ser-113, and Ser-141. The residue at position 144 (Thr-144) is a Phosphothreonine. A compositionally biased stretch (polar residues) spans 168–177 (VQRSSSQSDL). The interval 487–526 (LMEKLAALQMENAQLRDKTDELTIEIESLNVELIRSKTKA) is sufficient for interaction with ens. Composition is skewed to basic and acidic residues over residues 527–537 (KKQEKQEKQED) and 547–563 (RRGDSPSKTHLTEESPR). Ser-594 carries the phosphoserine modification. A compositionally biased stretch (basic and acidic residues) spans 616-634 (KAAKEGRSLTPESRSKELE). A phosphoserine mark is found at Ser-701 and Ser-714. Residues 799–919 (AKSLADSKDE…TSCLSHEKCS (121 aa)) are disordered. Residues 822-845 (SHKTASRNNLTTSETSIFSTTPFE) are compositionally biased toward polar residues. The span at 846-860 (SSQSGPSPTNSGNSN) shows a compositional bias: low complexity. A compositionally biased stretch (polar residues) spans 894–913 (ETSSTASGKSFESNSKTSCL).

As to quaternary structure, interacts with ens.

The protein localises to the cytoplasm. It localises to the cytoskeleton. Its subcellular location is the microtubule organizing center. It is found in the centrosome. The protein resides in the perinuclear region. In terms of biological role, required for the positioning and anchorage of the microtubule minus-ends in various cells. In fat body cells, part of perinuclear non-centrosomal microtubule-organizing centers (ncMTOCs) which function to accommodate the organization of microtubule (MT) networks to control nuclear positioning and dynein motor-based retrograde endosomal trafficking. Within the ncMTOCs, Msp300 and shot anchors the ncMTOC at the nuclear surface and recruits the MT minus-end regulators Patronin and Nin for assembly, anchoring and/or stabilization of circumferential and radial MTs at the ncMTOC. This protein may also function with Patronin to recruit msps to the ncMTOC for the gamma-tubulin-independent elongation of radial MTs. In embryonic myotubes and larval myofibers, functions with ens to regulate myonuclear positioning and, as a consequence, is involved in muscle development. Likely functions by positively regulating ens. Essential for embryogenesis, likely by contributing to accurate chromosome segregation during early embryonic nuclear divisions. However, other reports found that it is not essential for embryogenesis or embryonic cellular divisions. The polypeptide is Ninein homolog (Drosophila melanogaster (Fruit fly)).